Consider the following 100-residue polypeptide: MPRPKKPRTIGCLPKASCFKPNGIPAHNLPRIALEADELEALRLADVLQLHQLEAAQSMGVSRQTFGNIIKRARNKVALCLVEGKVLTLPNQSQDKEKEA.

Belongs to the UPF0251 family.

This chain is UPF0251 protein VV2_0946, found in Vibrio vulnificus (strain CMCP6).